The sequence spans 150 residues: Large ribosomal subunit protein bL9 (150 aa).

Belongs to the bacterial ribosomal protein bL9 family.

In terms of biological role, binds to the 23S rRNA. In Polaromonas sp. (strain JS666 / ATCC BAA-500), this protein is Large ribosomal subunit protein bL9.